We begin with the raw amino-acid sequence, 356 residues long: S-adenosylmethionine:tRNA ribosyltransferase-isomerase (356 aa).

The protein belongs to the QueA family. As to quaternary structure, monomer.

It localises to the cytoplasm. It catalyses the reaction 7-aminomethyl-7-carbaguanosine(34) in tRNA + S-adenosyl-L-methionine = epoxyqueuosine(34) in tRNA + adenine + L-methionine + 2 H(+). Its pathway is tRNA modification; tRNA-queuosine biosynthesis. Functionally, transfers and isomerizes the ribose moiety from AdoMet to the 7-aminomethyl group of 7-deazaguanine (preQ1-tRNA) to give epoxyqueuosine (oQ-tRNA). The polypeptide is S-adenosylmethionine:tRNA ribosyltransferase-isomerase (Cronobacter sakazakii (strain ATCC BAA-894) (Enterobacter sakazakii)).